The primary structure comprises 176 residues: Ribosome rescue factor SmrB (176 aa).

Residues 93-168 form the Smr domain; sequence LDLHGYRQSE…GDAALLVLID (76 aa).

Belongs to the SmrB family. Associates with collided ribosomes, but not with correctly translating polysomes.

In terms of biological role, acts as a ribosome collision sensor. Detects stalled/collided disomes (pairs of ribosomes where the leading ribosome is stalled and a second ribosome has collided with it) and endonucleolytically cleaves mRNA at the 5' boundary of the stalled ribosome. Stalled/collided disomes form a new interface (primarily via the 30S subunits) that binds SmrB. Cleaved mRNA becomes available for tmRNA ligation, leading to ribosomal subunit dissociation and rescue of stalled ribosomes. In Shewanella baltica (strain OS155 / ATCC BAA-1091), this protein is Ribosome rescue factor SmrB.